We begin with the raw amino-acid sequence, 387 residues long: MSEQYTTPERENPDDERAFDRVFDALSISCPCDNPSNIPNRLFASPPTQSAPEQIDNGAADVQPFDFQAYNQPRLARTEGMLKLEIPNFSNLRSKVSTPFQYIGNLPWRLAAKTEKTKRTSDVKFFSVYIDCNPESESTLWSCDAVVEFRLVSRNRTIPPFSRQFTNKFNYNSNNWGFPSFMAWEDVNNSNYVRNEMVTVTARVVVQKVLGVRNVPKYDFGAMQTNICDMTLVINKQKLFVNKAYLALYSPVFYAMFFSNFQEREKTQVELEDVVLEEFRELLHVIYPCHKPITSDNVEYLLELGDKYEIQYVMDECERFLVGSEDILQITKLMWADQYLLAKLQDSCLRNIKEVSDVKAIKLTEEFKNLSDATKAALLEKVLKIVN.

One can recognise an MATH domain in the interval 79–204; sequence EGMLKLEIPN…NEMVTVTARV (126 aa). A BTB domain is found at 228-295; the sequence is CDMTLVINKQ…IYPCHKPITS (68 aa).

The polypeptide is BTB and MATH domain-containing protein 38 (bath-38) (Caenorhabditis elegans).